Reading from the N-terminus, the 366-residue chain is Chorismate synthase (366 aa).

Residues Arg48 and Arg54 each contribute to the NADP(+) site. FMN contacts are provided by residues 125–127, 238–239, Gly278, 293–297, and Arg319; these read RSS, NA, and KPTSS.

Belongs to the chorismate synthase family. Homotetramer. FMNH2 is required as a cofactor.

It carries out the reaction 5-O-(1-carboxyvinyl)-3-phosphoshikimate = chorismate + phosphate. It participates in metabolic intermediate biosynthesis; chorismate biosynthesis; chorismate from D-erythrose 4-phosphate and phosphoenolpyruvate: step 7/7. Its function is as follows. Catalyzes the anti-1,4-elimination of the C-3 phosphate and the C-6 proR hydrogen from 5-enolpyruvylshikimate-3-phosphate (EPSP) to yield chorismate, which is the branch point compound that serves as the starting substrate for the three terminal pathways of aromatic amino acid biosynthesis. This reaction introduces a second double bond into the aromatic ring system. The protein is Chorismate synthase of Paraburkholderia xenovorans (strain LB400).